A 743-amino-acid polypeptide reads, in one-letter code: 1,4-alpha-glucan branching enzyme GlgB (743 aa).

Catalysis depends on aspartate 416, which acts as the Nucleophile. The active-site Proton donor is glutamate 469.

The protein belongs to the glycosyl hydrolase 13 family. GlgB subfamily. As to quaternary structure, monomer.

It carries out the reaction Transfers a segment of a (1-&gt;4)-alpha-D-glucan chain to a primary hydroxy group in a similar glucan chain.. Its pathway is glycan biosynthesis; glycogen biosynthesis. Catalyzes the formation of the alpha-1,6-glucosidic linkages in glycogen by scission of a 1,4-alpha-linked oligosaccharide from growing alpha-1,4-glucan chains and the subsequent attachment of the oligosaccharide to the alpha-1,6 position. The polypeptide is 1,4-alpha-glucan branching enzyme GlgB (Shewanella baltica (strain OS185)).